A 313-amino-acid polypeptide reads, in one-letter code: Ribosomal RNA small subunit methyltransferase H (313 aa).

S-adenosyl-L-methionine contacts are provided by residues 35–37, aspartate 55, phenylalanine 79, aspartate 101, and glutamine 108; that span reads GGH.

It belongs to the methyltransferase superfamily. RsmH family.

The protein localises to the cytoplasm. The catalysed reaction is cytidine(1402) in 16S rRNA + S-adenosyl-L-methionine = N(4)-methylcytidine(1402) in 16S rRNA + S-adenosyl-L-homocysteine + H(+). Functionally, specifically methylates the N4 position of cytidine in position 1402 (C1402) of 16S rRNA. The chain is Ribosomal RNA small subunit methyltransferase H from Enterobacter sp. (strain 638).